Reading from the N-terminus, the 616-residue chain is Dihydroxy-acid dehydratase (616 aa).

Aspartate 81 contributes to the Mg(2+) binding site. Cysteine 122 contacts [2Fe-2S] cluster. 2 residues coordinate Mg(2+): aspartate 123 and lysine 124. Position 124 is an N6-carboxylysine (lysine 124). Cysteine 195 lines the [2Fe-2S] cluster pocket. Position 491 (glutamate 491) interacts with Mg(2+). Serine 517 functions as the Proton acceptor in the catalytic mechanism.

It belongs to the IlvD/Edd family. As to quaternary structure, homodimer. [2Fe-2S] cluster is required as a cofactor. The cofactor is Mg(2+).

The enzyme catalyses (2R)-2,3-dihydroxy-3-methylbutanoate = 3-methyl-2-oxobutanoate + H2O. It carries out the reaction (2R,3R)-2,3-dihydroxy-3-methylpentanoate = (S)-3-methyl-2-oxopentanoate + H2O. Its pathway is amino-acid biosynthesis; L-isoleucine biosynthesis; L-isoleucine from 2-oxobutanoate: step 3/4. It participates in amino-acid biosynthesis; L-valine biosynthesis; L-valine from pyruvate: step 3/4. Functionally, functions in the biosynthesis of branched-chain amino acids. Catalyzes the dehydration of (2R,3R)-2,3-dihydroxy-3-methylpentanoate (2,3-dihydroxy-3-methylvalerate) into 2-oxo-3-methylpentanoate (2-oxo-3-methylvalerate) and of (2R)-2,3-dihydroxy-3-methylbutanoate (2,3-dihydroxyisovalerate) into 2-oxo-3-methylbutanoate (2-oxoisovalerate), the penultimate precursor to L-isoleucine and L-valine, respectively. The chain is Dihydroxy-acid dehydratase from Methylobacillus flagellatus (strain ATCC 51484 / DSM 6875 / VKM B-1610 / KT).